Reading from the N-terminus, the 1268-residue chain is Neurocan core protein (1268 aa).

The N-terminal stretch at 1 to 22 (MGAGSVWASGLLLLWLLLLVAG) is a signal peptide. In terms of domain architecture, Ig-like V-type spans 37–157 (RMLKSGSGPV…EQDLVTLEVT (121 aa)). Disulfide bonds link cysteine 58–cysteine 139, cysteine 181–cysteine 252, cysteine 205–cysteine 226, cysteine 279–cysteine 354, and cysteine 303–cysteine 324. Asparagine 121 carries N-linked (GlcNAc...) asparagine glycosylation. Link domains follow at residues 159–254 (VVFH…YCFA) and 258–356 (GGEV…YCFR). An N-linked (GlcNAc...) asparagine glycan is attached at asparagine 339. Disordered regions lie at residues 363 to 391 (QHGD…ELKP), 406 to 442 (PLMS…SWPS), 472 to 540 (PLGT…DQSH), and 574 to 630 (ISPS…LQAS). Serine 380 and serine 410 each carry an O-linked (Xyl...) (chondroitin sulfate) serine glycan. Positions 419–430 (TWTQAPEETLGS) are enriched in polar residues. Low complexity predominate over residues 575-585 (SPSVPSTESTP). The segment covering 608 to 617 (PSEPPAPSPG) has biased composition (pro residues). The span at 618–630 (PSEALSAVSLQAS) shows a compositional bias: low complexity. A glycan (N-linked (GlcNAc...) asparagine) is linked at asparagine 742. The EGF-like 1 domain maps to 960-996 (PTDPCENNPCLHGGTCHTNGTVYGCSCDQGYAGENCE). 11 disulfide bridges follow: cysteine 964/cysteine 975, cysteine 969/cysteine 984, cysteine 986/cysteine 995, cysteine 1002/cysteine 1013, cysteine 1007/cysteine 1022, cysteine 1024/cysteine 1033, cysteine 1040/cysteine 1051, cysteine 1068/cysteine 1160, cysteine 1136/cysteine 1152, cysteine 1167/cysteine 1210, and cysteine 1196/cysteine 1223. Asparagine 978 is a glycosylation site (N-linked (GlcNAc...) asparagine). One can recognise an EGF-like 2; calcium-binding domain in the interval 998–1034 (DIDDCLCSPCENGGTCIDEVNGFICLCLPSYGGSLCE). In terms of domain architecture, C-type lectin spans 1036-1165 (DTEGCDRGWH…LPYVCKKGTV (130 aa)). A Sushi domain is found at 1165–1225 (VLCGPPPAVE…WDRPQIMCIK (61 aa)). Asparagine 1175 is a glycosylation site (N-linked (GlcNAc...) asparagine). Basic residues predominate over residues 1228–1255 (RSHRMRRHHHHPHRHHKPRKEHRKHKRH). The interval 1228-1268 (RSHRMRRHHHHPHRHHKPRKEHRKHKRHPAEDWEKDEGDFC) is disordered.

Belongs to the aggrecan/versican proteoglycan family. O-glycosylated; contains chondroitin sulfate. In terms of tissue distribution, brain.

It localises to the secreted. Its function is as follows. May modulate neuronal adhesion and neurite growth during development by binding to neural cell adhesion molecules (NG-CAM and N-CAM). Chondroitin sulfate proteoglycan; binds to hyaluronic acid. This is Neurocan core protein (Ncan) from Mus musculus (Mouse).